The sequence spans 485 residues: Aspartyl/glutamyl-tRNA(Asn/Gln) amidotransferase subunit B (485 aa).

This sequence belongs to the GatB/GatE family. GatB subfamily. As to quaternary structure, heterotrimer of A, B and C subunits.

The catalysed reaction is L-glutamyl-tRNA(Gln) + L-glutamine + ATP + H2O = L-glutaminyl-tRNA(Gln) + L-glutamate + ADP + phosphate + H(+). It carries out the reaction L-aspartyl-tRNA(Asn) + L-glutamine + ATP + H2O = L-asparaginyl-tRNA(Asn) + L-glutamate + ADP + phosphate + 2 H(+). In terms of biological role, allows the formation of correctly charged Asn-tRNA(Asn) or Gln-tRNA(Gln) through the transamidation of misacylated Asp-tRNA(Asn) or Glu-tRNA(Gln) in organisms which lack either or both of asparaginyl-tRNA or glutaminyl-tRNA synthetases. The reaction takes place in the presence of glutamine and ATP through an activated phospho-Asp-tRNA(Asn) or phospho-Glu-tRNA(Gln). This Methylacidiphilum infernorum (isolate V4) (Methylokorus infernorum (strain V4)) protein is Aspartyl/glutamyl-tRNA(Asn/Gln) amidotransferase subunit B.